The following is a 211-amino-acid chain: 3-demethoxyubiquinol 3-hydroxylase (211 aa).

The disordered stretch occupies residues 22 to 43 (KHPLNPNRKSPSANTVDGQLSD). Positions 28-42 (NRKSPSANTVDGQLS) are enriched in polar residues. Fe cation-binding residues include Glu-60, Glu-90, His-93, Glu-142, Glu-174, and His-177.

It belongs to the COQ7 family. The cofactor is Fe cation.

Its subcellular location is the cell membrane. It carries out the reaction a 5-methoxy-2-methyl-3-(all-trans-polyprenyl)benzene-1,4-diol + AH2 + O2 = a 3-demethylubiquinol + A + H2O. It participates in cofactor biosynthesis; ubiquinone biosynthesis. Its function is as follows. Catalyzes the hydroxylation of 2-nonaprenyl-3-methyl-6-methoxy-1,4-benzoquinol during ubiquinone biosynthesis. In Francisella philomiragia subsp. philomiragia (strain ATCC 25017 / CCUG 19701 / FSC 153 / O#319-036), this protein is 3-demethoxyubiquinol 3-hydroxylase.